The following is a 1097-amino-acid chain: DNA-directed RNA polymerase subunit beta (1097 aa).

Residues 1072–1097 (QDVNPRRSTPSRPTYESLGVADYDED) form a disordered region.

It belongs to the RNA polymerase beta chain family. In cyanobacteria the RNAP catalytic core is composed of 2 alpha, 1 beta, 1 beta', 1 gamma and 1 omega subunit. When a sigma factor is associated with the core the holoenzyme is formed, which can initiate transcription.

The enzyme catalyses RNA(n) + a ribonucleoside 5'-triphosphate = RNA(n+1) + diphosphate. In terms of biological role, DNA-dependent RNA polymerase catalyzes the transcription of DNA into RNA using the four ribonucleoside triphosphates as substrates. The polypeptide is DNA-directed RNA polymerase subunit beta (Synechococcus sp. (strain CC9605)).